The primary structure comprises 187 residues: Elongation factor P (187 aa).

The protein belongs to the elongation factor P family.

The protein localises to the cytoplasm. It participates in protein biosynthesis; polypeptide chain elongation. Functionally, involved in peptide bond synthesis. Stimulates efficient translation and peptide-bond synthesis on native or reconstituted 70S ribosomes in vitro. Probably functions indirectly by altering the affinity of the ribosome for aminoacyl-tRNA, thus increasing their reactivity as acceptors for peptidyl transferase. The sequence is that of Elongation factor P from Rhodococcus erythropolis (strain PR4 / NBRC 100887).